The primary structure comprises 380 residues: MTRSGHPVTLDDLPLRADLRGKAPYGAPQLAVPVRLNTNENPHPPTRALVDDVVRSVREAAIDLHRYPDRDAVALRADLAGYLTAQTGIQLGVENIWAANGSNEILQQLLQAFGGPGRSAIGFVPSYSMHPIISDGTHTEWIEASRANDFGLDVDVAVAAVVDRKPDVVFIASPNNPSGQSVSLPDLCKLLDVAPGIAIVDEAYGEFSSQPSAVSLVEEYPSKLVVTRTMSKAFAFAGGRLGYLIATPAVIDAMLLVRLPYHLSSVTQAAARAALRHSDDTLSSVAALIAERERVTTSLNDMGFRVIPSDANFVLFGEFADAPAAWRRYLEAGILIRDVGIPGYLRATTGLAEENDAFLRASARIATDLVPVTRSPVGAP.

Lys232 carries the N6-(pyridoxal phosphate)lysine modification.

This sequence belongs to the class-II pyridoxal-phosphate-dependent aminotransferase family. Histidinol-phosphate aminotransferase subfamily. As to quaternary structure, homodimer. The cofactor is pyridoxal 5'-phosphate.

The enzyme catalyses L-histidinol phosphate + 2-oxoglutarate = 3-(imidazol-4-yl)-2-oxopropyl phosphate + L-glutamate. It functions in the pathway amino-acid biosynthesis; L-histidine biosynthesis; L-histidine from 5-phospho-alpha-D-ribose 1-diphosphate: step 7/9. The polypeptide is Histidinol-phosphate aminotransferase (Mycobacterium bovis (strain BCG / Pasteur 1173P2)).